A 121-amino-acid polypeptide reads, in one-letter code: Apoptin (121 aa).

Disordered stretches follow at residues 1 to 28 (MNAL…LETP) and 57 to 121 (LRSA…CIRL). The span at 58 to 70 (RSATADNSESTGF) shows a compositional bias: polar residues. Basic and acidic residues predominate over residues 88–102 (RSCDPSEYRVSELKE).

Belongs to the gyrovirus apoptin family.

It localises to the host nucleus. In terms of biological role, may act as transcriptional regulator. Induces apoptosis in infected cells. Element of infectious replication cycle. The chain is Apoptin (VP3) from Gallus gallus (Chicken).